The sequence spans 60 residues: UPF0434 protein SG0997 (60 aa).

Belongs to the UPF0434 family.

In Sodalis glossinidius (strain morsitans), this protein is UPF0434 protein SG0997.